We begin with the raw amino-acid sequence, 932 residues long: Protocadherin gamma-A2 (932 aa).

The N-terminal stretch at 1–28 (MAALQKLPHCRKLFLLCFLLATLWEARA) is a signal peptide. 6 Cadherin domains span residues 29 to 133 (GQIR…APRF), 134 to 242 (GVEE…APVF), 243 to 347 (TQPE…APEF), 348 to 452 (YMTS…APAF), 453 to 562 (SRTS…PPEI), and 570 to 682 (DGST…EPSA). Residues 29-692 (GQIRYSVREE…KPNDSDLTLY (664 aa)) are Extracellular-facing. Asparagine 419 and asparagine 545 each carry an N-linked (GlcNAc...) asparagine glycan. N-linked (GlcNAc...) asparagine glycosylation occurs at asparagine 685. Residues 693–713 (LVVAVAAVSCVFLAFVIVLLA) form a helical membrane-spanning segment. Residues 714-932 (HRLRRWHKSR…KKKSGKKEKK (219 aa)) are Cytoplasmic-facing. Disordered regions lie at residues 798–841 (LEEE…WPNN) and 902–932 (ATLT…KEKK). Over residues 806–841 (FSQQAPPNTDWRFSQAQRPGTSGSQNGDDTGTWPNN) the composition is skewed to polar residues. Residues 922-932 (NKKKSGKKEKK) show a composition bias toward basic residues.

The protein localises to the cell membrane. Functionally, potential calcium-dependent cell-adhesion protein. May be involved in the establishment and maintenance of specific neuronal connections in the brain. The protein is Protocadherin gamma-A2 (PCDHGA2) of Pan troglodytes (Chimpanzee).